We begin with the raw amino-acid sequence, 249 residues long: Homeobox protein TGIF2LX (249 aa).

Disordered stretches follow at residues 1-65 (MEAA…GYSP) and 126-199 (DPIV…PKKK). The span at 9 to 27 (AETRSRVEKDSRRAIKDSP) shows a compositional bias: basic and acidic residues. Over residues 28–46 (AKTQSPAQDTSIMLRNNAD) the composition is skewed to polar residues. The homeobox; TALE-type DNA-binding region spans 55–118 (EHKKKRKGYS…INARRRILPD (64 aa)). Positions 159-172 (DNVQSLPLRSSPKG) are enriched in polar residues.

This sequence belongs to the TALE/TGIF homeobox family.

The protein resides in the nucleus. Its function is as follows. May have a transcription role in testis. This is Homeobox protein TGIF2LX (TGIF2LX) from Macaca mulatta (Rhesus macaque).